Here is a 355-residue protein sequence, read N- to C-terminus: Alanine racemase (355 aa).

Catalysis depends on K37, which acts as the Proton acceptor; specific for D-alanine. Residue K37 is modified to N6-(pyridoxal phosphate)lysine. R129 serves as a coordination point for substrate. Catalysis depends on Y251, which acts as the Proton acceptor; specific for L-alanine. M299 contributes to the substrate binding site.

It belongs to the alanine racemase family. The cofactor is pyridoxal 5'-phosphate.

It catalyses the reaction L-alanine = D-alanine. It functions in the pathway amino-acid biosynthesis; D-alanine biosynthesis; D-alanine from L-alanine: step 1/1. In terms of biological role, catalyzes the interconversion of L-alanine and D-alanine. May also act on other amino acids. This is Alanine racemase (alr) from Deinococcus geothermalis (strain DSM 11300 / CIP 105573 / AG-3a).